The following is a 235-amino-acid chain: Protein Thf1 (235 aa).

Positions 183–204 form a coiled coil; the sequence is DKLNKDLELYRSNLDKMAQALV. A disordered region spans residues 213–235; that stretch reads DRKKREQRKQQSTAPVAPPSSNE. Polar residues predominate over residues 222-235; it reads QQSTAPVAPPSSNE.

Belongs to the THF1 family.

Its function is as follows. May be involved in photosynthetic membrane biogenesis. In Nostoc punctiforme (strain ATCC 29133 / PCC 73102), this protein is Protein Thf1.